We begin with the raw amino-acid sequence, 113 residues long: TYRO protein tyrosine kinase-binding protein (113 aa).

An N-terminal signal peptide occupies residues 1–27 (MGGLEPCSRLLLLPLLLAVGGLRPVQA). The Extracellular segment spans residues 28-40 (QAQSDCSCSTVSP). A helical transmembrane segment spans residues 41–61 (GVLAGIVMGDLVLTVLIALAV). Asp50 is a Ca(2+) binding site. The Cytoplasmic segment spans residues 62-113 (YFLGRLVHRGRGAAEAATRKQRITETESPYQELQGQRSDVYSDLNMQRPYYK). Residues 75–113 (AEAATRKQRITETESPYQELQGQRSDVYSDLNMQRPYYK) are disordered. One can recognise an ITAM domain in the interval 80-108 (RKQRITETESPYQELQGQRSDVYSDLNMQ). Residues 87–100 (TESPYQELQGQRSD) show a composition bias toward polar residues. Phosphotyrosine is present on residues Tyr91 and Tyr102.

Belongs to the TYROBP family. Homodimer; disulfide-linked. Homotrimer; disulfide-linked. Homotetramer; disulfide-linked. Homotrimers and homotetramers form when low levels of partner receptors are available and is competitive with assembly with interacting receptors. They may represent alternative oligomerization states or may be intermediates in the receptor assembly process. Binding of a metal cation aids in homooligomerization through coordination of the metal ion by the subunits of the oligomer. Interacts with TREM1. Interacts with TREM2. Interacts with CLECSF5. Interacts with CD300LB and CD300C2. Interacts with CD300E. Interacts (via ITAM domain) with SYK (via SH2 domains); activates SYK mediating neutrophils and macrophages integrin-mediated activation. Interacts with KLRC2. Interacts with CD300H. Interacts with KLRD1. Interacts with SIGLEC1. In terms of processing, following ligand binding by associated receptors, tyrosine phosphorylated in the ITAM domain which leads to activation of additional tyrosine kinases and subsequent cell activation.

The protein resides in the cell membrane. Functionally, adapter protein which non-covalently associates with activating receptors found on the surface of a variety of immune cells to mediate signaling and cell activation following ligand binding by the receptors. TYROBP is tyrosine-phosphorylated in the ITAM domain following ligand binding by the associated receptors which leads to activation of additional tyrosine kinases and subsequent cell activation. Also has an inhibitory role in some cells. Non-covalently associates with activating receptors of the CD300 family to mediate cell activation. Also mediates cell activation through association with activating receptors of the CD200R family. Required for neutrophil activation mediated by integrin. Required for the activation of myeloid cells mediated by the CLEC5A/MDL1 receptor. Associates with natural killer (NK) cell receptors such as the KLRD1/KLRC2 heterodimer to mediate NK cell activation. Associates with TREM1 to mediate activation of neutrophils and monocytes. Associates with TREM2 on monocyte-derived dendritic cells to mediate up-regulation of chemokine receptor CCR7 and dendritic cell maturation and survival. Association with TREM2 mediates cytokine-induced formation of multinucleated giant cells which are formed by the fusion of macrophages. Stabilizes the TREM2 C-terminal fragment (TREM2-CTF) produced by TREM2 ectodomain shedding which suppresses the release of pro-inflammatory cytokines. In microglia, required with TREM2 for phagocytosis of apoptotic neurons. Required with ITGAM/CD11B in microglia to control production of microglial superoxide ions which promote the neuronal apoptosis that occurs during brain development. Promotes pro-inflammatory responses in microglia following nerve injury which accelerates degeneration of injured neurons. Positively regulates the expression of the IRAK3/IRAK-M kinase and IL10 production by liver dendritic cells and inhibits their T cell allosimulatory ability. Negatively regulates B cell proliferation. Required for CSF1-mediated osteoclast cytoskeletal organization. Positively regulates multinucleation during osteoclast development. In Pan troglodytes (Chimpanzee), this protein is TYRO protein tyrosine kinase-binding protein.